The sequence spans 77 residues: MKLSVRFISAALLLFMVFIATGMGPVTVEARTCESKSHRFKGPCVSTHNCANVCHNEGFGGGKCRGFRRRCYCTRHC.

The first 30 residues, M1–A30, serve as a signal peptide directing secretion. Disulfide bonds link C33–C77, C44–C64, C50–C71, and C54–C73.

This sequence belongs to the DEFL family. As to expression, expressed in the whole plant except roots.

It localises to the secreted. Its function is as follows. Confers broad-spectrum resistance to pathogens. This chain is Defensin-like protein 1 (PDF2.3), found in Arabidopsis thaliana (Mouse-ear cress).